The following is a 72-amino-acid chain: uncharacterized protein (72 aa).

This is an uncharacterized protein from Mycobacterium tuberculosis (strain ATCC 25618 / H37Rv).